Consider the following 405-residue polypeptide: Argininosuccinate synthase (405 aa).

Residues 10–18 (AYSGGVDTS) and alanine 38 contribute to the ATP site. Tyrosine 89 provides a ligand contact to L-citrulline. Glycine 119 provides a ligand contact to ATP. Residues threonine 121, asparagine 125, and aspartate 126 each contribute to the L-aspartate site. Asparagine 125 contacts L-citrulline. Residues arginine 129, serine 177, serine 186, glutamate 262, and tyrosine 274 each contribute to the L-citrulline site.

Belongs to the argininosuccinate synthase family. Type 1 subfamily. Homotetramer.

The protein resides in the cytoplasm. It carries out the reaction L-citrulline + L-aspartate + ATP = 2-(N(omega)-L-arginino)succinate + AMP + diphosphate + H(+). It participates in amino-acid biosynthesis; L-arginine biosynthesis; L-arginine from L-ornithine and carbamoyl phosphate: step 2/3. This Synechococcus sp. (strain RCC307) protein is Argininosuccinate synthase.